Reading from the N-terminus, the 134-residue chain is 10 kDa prolamin (134 aa).

An N-terminal signal peptide occupies residues 1–24 (MAAYTSKIFALFALIALSASATTA). Residues 69–76 (QQQCCMQL) form an octapeptide unique to cereal prolamins region.

Belongs to the prolamin family.

The protein localises to the vacuole. The protein resides in the aleurone grain. Its function is as follows. Seed storage protein; serves as a source of nitrogen, carbon and sulfur for the young developing seedling. The sequence is that of 10 kDa prolamin from Oryza sativa subsp. indica (Rice).